The sequence spans 475 residues: Ribulose bisphosphate carboxylase large chain (475 aa).

Residues 1–2 (MS) constitute a propeptide that is removed on maturation. The residue at position 3 (P3) is an N-acetylproline. Residue K14 is modified to N6,N6,N6-trimethyllysine. 2 residues coordinate substrate: N123 and T173. K175 acts as the Proton acceptor in catalysis. Substrate is bound at residue K177. K201, D203, and E204 together coordinate Mg(2+). K201 carries the N6-carboxylysine modification. Residue H294 is the Proton acceptor of the active site. R295, H327, and S379 together coordinate substrate.

The protein belongs to the RuBisCO large chain family. Type I subfamily. In terms of assembly, heterohexadecamer of 8 large chains and 8 small chains; disulfide-linked. The disulfide link is formed within the large subunit homodimers. Requires Mg(2+) as cofactor. Post-translationally, the disulfide bond which can form in the large chain dimeric partners within the hexadecamer appears to be associated with oxidative stress and protein turnover.

It is found in the plastid. Its subcellular location is the chloroplast. The catalysed reaction is 2 (2R)-3-phosphoglycerate + 2 H(+) = D-ribulose 1,5-bisphosphate + CO2 + H2O. It carries out the reaction D-ribulose 1,5-bisphosphate + O2 = 2-phosphoglycolate + (2R)-3-phosphoglycerate + 2 H(+). Functionally, ruBisCO catalyzes two reactions: the carboxylation of D-ribulose 1,5-bisphosphate, the primary event in carbon dioxide fixation, as well as the oxidative fragmentation of the pentose substrate in the photorespiration process. Both reactions occur simultaneously and in competition at the same active site. This chain is Ribulose bisphosphate carboxylase large chain, found in Pinus balfouriana (Foxtail pine).